The chain runs to 461 residues: tRNA modification GTPase MnmE (461 aa).

(6S)-5-formyl-5,6,7,8-tetrahydrofolate-binding residues include Arg-27, Glu-89, and Arg-128. Positions 224–382 (GLATAIVGQP…LEELINKLFF (159 aa)) constitute a TrmE-type G domain. Asn-234 contacts K(+). Residues 234-239 (NVGKSS), 253-259 (TDVAGTT), and 278-281 (DTAG) each bind GTP. A Mg(2+)-binding site is contributed by Ser-238. Residues Thr-253, Val-255, and Thr-258 each coordinate K(+). Thr-259 is a Mg(2+) binding site. Lys-461 is a (6S)-5-formyl-5,6,7,8-tetrahydrofolate binding site.

This sequence belongs to the TRAFAC class TrmE-Era-EngA-EngB-Septin-like GTPase superfamily. TrmE GTPase family. Homodimer. Heterotetramer of two MnmE and two MnmG subunits. K(+) is required as a cofactor.

The protein localises to the cytoplasm. Functionally, exhibits a very high intrinsic GTPase hydrolysis rate. Involved in the addition of a carboxymethylaminomethyl (cmnm) group at the wobble position (U34) of certain tRNAs, forming tRNA-cmnm(5)s(2)U34. The sequence is that of tRNA modification GTPase MnmE from Lactobacillus acidophilus (strain ATCC 700396 / NCK56 / N2 / NCFM).